The sequence spans 193 residues: Ion-translocating oxidoreductase complex subunit A (193 aa).

The next 6 helical transmembrane spans lie at 5-25 (LLLFVGTILVNNFVLVKFLGL), 39-59 (MGMGLATTFVMTLASICAWLI), 63-83 (ILIPLNLIYLRTLAFILVIAV), 102-122 (LLGIFLPLITTNCAVLGVALL), 134-154 (ALYGFSAAVGFSLVMVLFTAI), and 171-191 (AIALITAGLMSLAFMGFSGLV).

This sequence belongs to the NqrDE/RnfAE family. In terms of assembly, the complex is composed of six subunits: RsxA, RsxB, RsxC, RsxD, RsxE and RsxG.

The protein resides in the cell inner membrane. Functionally, part of a membrane-bound complex that couples electron transfer with translocation of ions across the membrane. Required to maintain the reduced state of SoxR. This is Ion-translocating oxidoreductase complex subunit A from Shigella boydii serotype 4 (strain Sb227).